Consider the following 207-residue polypeptide: Methylated-DNA--protein-cysteine methyltransferase (207 aa).

DNA is bound by residues Y123 and R137. Catalysis depends on C154, which acts as the Nucleophile; methyl group acceptor. Residue S160 coordinates DNA.

It belongs to the MGMT family.

It is found in the nucleus. The enzyme catalyses a 6-O-methyl-2'-deoxyguanosine in DNA + L-cysteinyl-[protein] = S-methyl-L-cysteinyl-[protein] + a 2'-deoxyguanosine in DNA. It carries out the reaction a 4-O-methyl-thymidine in DNA + L-cysteinyl-[protein] = a thymidine in DNA + S-methyl-L-cysteinyl-[protein]. Functionally, involved in the cellular defense against the biological effects of O6-methylguanine (O6-MeG) and O4-methylthymine (O4-MeT) in DNA. Repairs the methylated nucleobase in DNA by stoichiometrically transferring the methyl group to a cysteine residue in the enzyme. This is a suicide reaction: the enzyme is irreversibly inactivated. This is Methylated-DNA--protein-cysteine methyltransferase (MGT1) from Candida glabrata (strain ATCC 2001 / BCRC 20586 / JCM 3761 / NBRC 0622 / NRRL Y-65 / CBS 138) (Yeast).